The primary structure comprises 454 residues: Probable spastin homolog Bm1_53365 (454 aa).

218–225 (GPPGNGKT) serves as a coordination point for ATP.

The protein belongs to the AAA ATPase family. Spastin subfamily. Homohexamer. The homohexamer is stabilized by ATP-binding. The homohexamer may adopt a ring conformation through which microtubules pass prior to being severed. Interacts with microtubules.

It localises to the cytoplasm. The protein localises to the cytoskeleton. Its subcellular location is the perinuclear region. It catalyses the reaction n ATP + n H2O + a microtubule = n ADP + n phosphate + (n+1) alpha/beta tubulin heterodimers.. Its function is as follows. Severs microtubules, probably in an ATP-dependent fashion. This is Probable spastin homolog Bm1_53365 from Brugia malayi (Filarial nematode worm).